Reading from the N-terminus, the 157-residue chain is Small ribosomal subunit protein uS9 (157 aa).

It belongs to the universal ribosomal protein uS9 family.

In Caulobacter sp. (strain K31), this protein is Small ribosomal subunit protein uS9.